The chain runs to 345 residues: Putative RING-H2 finger protein ATL36 (345 aa).

A signal peptide spans 1–31 (MNIFTRYHLPRVVSGVILPLFLFHLLPYVTC). A helical membrane pass occupies residues 50 to 70 (SIIAIVVLAIFISLGMVSCCL). The segment at 123–165 (CAICLSEFEDQETLRWMPPCSHTFHANCIDVWLSSWSTCPVCR) adopts an RING-type; atypical zinc-finger fold. Residue Ser264 is modified to Phosphoserine.

The protein belongs to the RING-type zinc finger family. ATL subfamily.

It is found in the membrane. It catalyses the reaction S-ubiquitinyl-[E2 ubiquitin-conjugating enzyme]-L-cysteine + [acceptor protein]-L-lysine = [E2 ubiquitin-conjugating enzyme]-L-cysteine + N(6)-ubiquitinyl-[acceptor protein]-L-lysine.. The protein operates within protein modification; protein ubiquitination. This is Putative RING-H2 finger protein ATL36 (ATL36) from Arabidopsis thaliana (Mouse-ear cress).